Reading from the N-terminus, the 183-residue chain is Large ribosomal subunit protein uL5 (183 aa).

This sequence belongs to the universal ribosomal protein uL5 family. Part of the 50S ribosomal subunit; part of the 5S rRNA/L5/L18/L25 subcomplex. Contacts the 5S rRNA and the P site tRNA. Forms a bridge to the 30S subunit in the 70S ribosome.

Its function is as follows. This is one of the proteins that bind and probably mediate the attachment of the 5S RNA into the large ribosomal subunit, where it forms part of the central protuberance. In the 70S ribosome it contacts protein S13 of the 30S subunit (bridge B1b), connecting the 2 subunits; this bridge is implicated in subunit movement. Contacts the P site tRNA; the 5S rRNA and some of its associated proteins might help stabilize positioning of ribosome-bound tRNAs. The sequence is that of Large ribosomal subunit protein uL5 from Pseudothermotoga lettingae (strain ATCC BAA-301 / DSM 14385 / NBRC 107922 / TMO) (Thermotoga lettingae).